Here is a 303-residue protein sequence, read N- to C-terminus: Lipoyl synthase (303 aa).

Residues C34, C39, C45, C60, C64, C67, and S273 each coordinate [4Fe-4S] cluster. Positions 46-262 (WSKKHATVMI…ERVARTKGFL (217 aa)) constitute a Radical SAM core domain.

Belongs to the radical SAM superfamily. Lipoyl synthase family. It depends on [4Fe-4S] cluster as a cofactor.

It is found in the cytoplasm. The enzyme catalyses [[Fe-S] cluster scaffold protein carrying a second [4Fe-4S](2+) cluster] + N(6)-octanoyl-L-lysyl-[protein] + 2 oxidized [2Fe-2S]-[ferredoxin] + 2 S-adenosyl-L-methionine + 4 H(+) = [[Fe-S] cluster scaffold protein] + N(6)-[(R)-dihydrolipoyl]-L-lysyl-[protein] + 4 Fe(3+) + 2 hydrogen sulfide + 2 5'-deoxyadenosine + 2 L-methionine + 2 reduced [2Fe-2S]-[ferredoxin]. It participates in protein modification; protein lipoylation via endogenous pathway; protein N(6)-(lipoyl)lysine from octanoyl-[acyl-carrier-protein]: step 2/2. In terms of biological role, catalyzes the radical-mediated insertion of two sulfur atoms into the C-6 and C-8 positions of the octanoyl moiety bound to the lipoyl domains of lipoate-dependent enzymes, thereby converting the octanoylated domains into lipoylated derivatives. The polypeptide is Lipoyl synthase (Rickettsia bellii (strain OSU 85-389)).